A 188-amino-acid polypeptide reads, in one-letter code: Elongation factor P (188 aa).

Belongs to the elongation factor P family.

It localises to the cytoplasm. It functions in the pathway protein biosynthesis; polypeptide chain elongation. Its function is as follows. Involved in peptide bond synthesis. Stimulates efficient translation and peptide-bond synthesis on native or reconstituted 70S ribosomes in vitro. Probably functions indirectly by altering the affinity of the ribosome for aminoacyl-tRNA, thus increasing their reactivity as acceptors for peptidyl transferase. The protein is Elongation factor P of Phytoplasma mali (strain AT).